The chain runs to 285 residues: Protease HtpX homolog (285 aa).

Transmembrane regions (helical) follow at residues 7-27 (TAMLMAAITALFIVIGGMIGG) and 30-50 (GMTIALLFALGMNFFSYWFSD). His-131 serves as a coordination point for Zn(2+). Glu-132 is an active-site residue. Zn(2+) is bound at residue His-135. 2 helical membrane-spanning segments follow: residues 146-166 (ITATMAGAISAIANFAMFFGG) and 177-197 (IAGIAVALLAPIAGALIQMAI). Glu-202 contacts Zn(2+).

It belongs to the peptidase M48B family. It depends on Zn(2+) as a cofactor.

Its subcellular location is the cell inner membrane. The chain is Protease HtpX homolog from Burkholderia multivorans (strain ATCC 17616 / 249).